A 393-amino-acid chain; its full sequence is CCCH-type zinc finger protein oma-2 (393 aa).

Residues 1-26 (MDMLKENVIQNNEARTESSVEPSHPD) form a disordered region. Positions 14-26 (ARTESSVEPSHPD) are enriched in basic and acidic residues. 2 consecutive C3H1-type zinc fingers follow at residues 105-133 (SYKT…HGEE) and 147-175 (KYRT…HPDN). Disordered regions lie at residues 227-251 (TPDE…RYEL) and 311-340 (KQST…LTAA). Residues 313-340 (STPGGVSGYSSSGSTPSQDSDSSPLTAA) are compositionally biased toward low complexity. Thr-327 carries the post-translational modification Phosphothreonine; by GSK3.

As to expression, exclusively expressed in the hermaphrodite gonad. Expression only in cellulized oocytes. Widely distributed throughout gonadal oocytes from the mitotic stage to the developing diakinesis stage.

The protein localises to the cytoplasm. It localises to the cytoplasmic granule. The protein resides in the cytoskeleton. Its subcellular location is the microtubule organizing center. It is found in the centrosome. Its function is as follows. Zinc-finger RNA-binding protein that binds to 5'-UA[AU]-3' motifs in the 3'-UTR of maternal mRNAs to suppress translation in oocytes and embryos. Acts redundantly with oma-1 to control the temporal expression and distribution of maternal proteins and thereby promote meiotic progression, oocyte maturation, fertilization and embryonic development. Also, together with oma-1, is involved in P-granule distribution during embryonic development. The polypeptide is CCCH-type zinc finger protein oma-2 (Caenorhabditis elegans).